Reading from the N-terminus, the 398-residue chain is Calcium-binding and coiled-coil domain-containing protein 2 (398 aa).

Positions 133–136 (ILVV) match the CLIR motif. Residues 137–301 (TTQGEVEEIE…RENSRLLSYM (165 aa)) are a coiled coil. Residues 203–206 (DYWE) carry the LIR-like motif. Residues 314–341 (TSDEGGAGQNPGLVYGNPYSGIQESSSP) are disordered. The interval 323–333 (NPGLVYGNPYS) is interaction with LGALS8. The interval 347 to 398 (KKCPICKADDICDHTLEQQQMQALCLNCPICDKIFPATEKQIFEDHVFCHSL) is interaction with MYO6. A UBZ1-type zinc finger spans residues 371-396 (CLNCPICDKIFPATEKQIFEDHVFCH). Residues cysteine 374, cysteine 377, histidine 392, and histidine 396 each coordinate Zn(2+). Serine 397 carries the phosphoserine modification.

It belongs to the CALCOCO family. As to quaternary structure, dimer. Part of a complex consisting of CALCOCO2, TAX1BP1 and MYO6. Interacts with MYO6. Interacts with GEMIN4. Interacts with ATG8 family members MAP1LC3A, MAP1LC3B, GABARAP, GABARAPL1 and GABARAPL2. Interacts with ATG8 family member MAP1LC3C. Interacts with LGALS8. Interacts with TOM1; the interaction is indirect and is mediated by MYO6, which acts as a bridge between TOM1 and CALCOCO2. Interacts with AZI2.

It localises to the cytoplasm. Its subcellular location is the perinuclear region. The protein localises to the cytoskeleton. It is found in the cytoplasmic vesicle. The protein resides in the autophagosome membrane. Xenophagy-specific receptor required for autophagy-mediated intracellular bacteria degradation. Acts as an effector protein of galectin-sensed membrane damage that restricts the proliferation of infecting pathogens upon entry into the cytosol by targeting LGALS8-associated bacteria for autophagy. Initially orchestrates bacteria targeting to autophagosomes and subsequently ensures pathogen degradation by regulating pathogen-containing autophagosome maturation. Bacteria targeting to autophagosomes relies on its interaction with MAP1LC3A, MAP1LC3B and/or GABARAPL2, whereas regulation of pathogen-containing autophagosome maturation requires the interaction with MAP3LC3C. May play a role in ruffle formation and actin cytoskeleton organization and seems to negatively regulate constitutive secretion. The sequence is that of Calcium-binding and coiled-coil domain-containing protein 2 from Macaca fascicularis (Crab-eating macaque).